The primary structure comprises 124 residues: Membrane-anchored ubiquitin-fold protein 2 (124 aa).

The region spanning 8-74 (LEIKFRLNDG…LENNKTVGDC (67 aa)) is the Ubiquitin-like domain. Residues Cys-115, Cys-117, Cys-119, and Cys-124 are each lipidated (S-palmitoyl cysteine).

Acylated protein. Probably modified with palmitate. Ubiquitous, but three fold higher expression in stamens.

The protein localises to the cell membrane. Its function is as follows. May serve as docking site to facilitate the association of other proteins to the plasma membrane. The chain is Membrane-anchored ubiquitin-fold protein 2 (MUB2) from Arabidopsis thaliana (Mouse-ear cress).